The following is a 310-amino-acid chain: Carbamate kinase 1 (310 aa).

Belongs to the carbamate kinase family.

It is found in the cytoplasm. The enzyme catalyses hydrogencarbonate + NH4(+) + ATP = carbamoyl phosphate + ADP + H2O + H(+). It participates in metabolic intermediate metabolism; carbamoyl phosphate degradation; CO(2) and NH(3) from carbamoyl phosphate: step 1/1. The sequence is that of Carbamate kinase 1 (arcC1) from Staphylococcus aureus (strain COL).